The chain runs to 312 residues: MKWSEISIHTTEEAVEAVSHILHEAGASGVAIEDPAELTKEREQQYGEIYALNPDEYPAEGVLIKAYFPQTDSLHETIAGVKSSIDVLPSYDIEIGTGNITVNEVNEEDWATAWKKYYHPVQISDTFTIVPTWEEYTPSSPDEKIIELDPGMAFGTGTHPTTTMCIRALEKTVQPGDNIIDVGTGSGVLSIAAAKLGASSVQAYDLDPVAVESAEMNVRLNKTDDIVSVGQNSLLEGIEGPVDLIVANLLAEIILLFPEDAARVVKSGGLFITSGIIAAKEKVISEALEKAGFTIEEVLRMEDWVAIIARNA.

Positions 162, 183, 205, and 248 each coordinate S-adenosyl-L-methionine.

This sequence belongs to the methyltransferase superfamily. PrmA family.

The protein localises to the cytoplasm. It catalyses the reaction L-lysyl-[protein] + 3 S-adenosyl-L-methionine = N(6),N(6),N(6)-trimethyl-L-lysyl-[protein] + 3 S-adenosyl-L-homocysteine + 3 H(+). In terms of biological role, methylates ribosomal protein L11. The protein is Ribosomal protein L11 methyltransferase of Bacillus cereus (strain B4264).